A 146-amino-acid polypeptide reads, in one-letter code: Bacterial hemoglobin (146 aa).

The region spanning 1–138 (MLDQQTINII…IADVFIQVEA (138 aa)) is the Globin domain. Residues Q53 and H85 each contribute to the heme b site.

It belongs to the globin family. In terms of assembly, homodimer.

Functionally, this protein functions as a terminal oxidase. In Vitreoscilla stercoraria, this protein is Bacterial hemoglobin (vhb).